Consider the following 140-residue polypeptide: Large ribosomal subunit protein uL14 (140 aa).

This sequence belongs to the universal ribosomal protein uL14 family.

In Nicotiana tabacum (Common tobacco), this protein is Large ribosomal subunit protein uL14 (RPL23).